Reading from the N-terminus, the 51-residue chain is MPQMAPLNWAMMTIMFSLSLLVSMIILYSNFNSTPPTKMKMKTSQKLIWKW.

The helical transmembrane segment at 7 to 27 (LNWAMMTIMFSLSLLVSMIIL) threads the bilayer.

It belongs to the ATPase protein 8 family. F-type ATPases have 2 components, CF(1) - the catalytic core - and CF(0) - the membrane proton channel.

The protein localises to the mitochondrion membrane. In terms of biological role, mitochondrial membrane ATP synthase (F(1)F(0) ATP synthase or Complex V) produces ATP from ADP in the presence of a proton gradient across the membrane which is generated by electron transport complexes of the respiratory chain. F-type ATPases consist of two structural domains, F(1) - containing the extramembraneous catalytic core and F(0) - containing the membrane proton channel, linked together by a central stalk and a peripheral stalk. During catalysis, ATP synthesis in the catalytic domain of F(1) is coupled via a rotary mechanism of the central stalk subunits to proton translocation. Part of the complex F(0) domain. Minor subunit located with subunit a in the membrane. This Limulus polyphemus (Atlantic horseshoe crab) protein is ATP synthase protein 8 (MT-ATP8).